The sequence spans 160 residues: Cyclic pyranopterin monophosphate synthase (160 aa).

Substrate-binding positions include 75-77 and 113-114; these read LCH and ME. D128 is a catalytic residue.

The protein belongs to the MoaC family. Homohexamer; trimer of dimers.

It carries out the reaction (8S)-3',8-cyclo-7,8-dihydroguanosine 5'-triphosphate = cyclic pyranopterin phosphate + diphosphate. Its pathway is cofactor biosynthesis; molybdopterin biosynthesis. Functionally, catalyzes the conversion of (8S)-3',8-cyclo-7,8-dihydroguanosine 5'-triphosphate to cyclic pyranopterin monophosphate (cPMP). The sequence is that of Cyclic pyranopterin monophosphate synthase from Methylobacterium nodulans (strain LMG 21967 / CNCM I-2342 / ORS 2060).